Here is a 595-residue protein sequence, read N- to C-terminus: NADH-quinone oxidoreductase subunit C/D (595 aa).

The segment at 1–186 (MVTDNSKATD…TPYFLNNAKQ (186 aa)) is NADH dehydrogenase I subunit C. The segment at 210 to 595 (DFMFLNLGPN…IDIVMADTDR (386 aa)) is NADH dehydrogenase I subunit D.

The protein in the N-terminal section; belongs to the complex I 30 kDa subunit family. It in the C-terminal section; belongs to the complex I 49 kDa subunit family. As to quaternary structure, NDH-1 is composed of 13 different subunits. Subunits NuoB, CD, E, F, and G constitute the peripheral sector of the complex.

The protein localises to the cell inner membrane. The catalysed reaction is a quinone + NADH + 5 H(+)(in) = a quinol + NAD(+) + 4 H(+)(out). Its function is as follows. NDH-1 shuttles electrons from NADH, via FMN and iron-sulfur (Fe-S) centers, to quinones in the respiratory chain. The immediate electron acceptor for the enzyme in this species is believed to be ubiquinone. Couples the redox reaction to proton translocation (for every two electrons transferred, four hydrogen ions are translocated across the cytoplasmic membrane), and thus conserves the redox energy in a proton gradient. This Psychrobacter sp. (strain PRwf-1) protein is NADH-quinone oxidoreductase subunit C/D.